Reading from the N-terminus, the 117-residue chain is Large ribosomal subunit protein uL18 (117 aa).

It belongs to the universal ribosomal protein uL18 family. As to quaternary structure, part of the 50S ribosomal subunit; part of the 5S rRNA/L5/L18/L25 subcomplex. Contacts the 5S and 23S rRNAs.

In terms of biological role, this is one of the proteins that bind and probably mediate the attachment of the 5S RNA into the large ribosomal subunit, where it forms part of the central protuberance. This chain is Large ribosomal subunit protein uL18, found in Blochmanniella pennsylvanica (strain BPEN).